The following is a 232-amino-acid chain: Large ribosomal subunit protein uL1 (232 aa).

It belongs to the universal ribosomal protein uL1 family. In terms of assembly, part of the 50S ribosomal subunit.

In terms of biological role, binds directly to 23S rRNA. The L1 stalk is quite mobile in the ribosome, and is involved in E site tRNA release. Functionally, protein L1 is also a translational repressor protein, it controls the translation of the L11 operon by binding to its mRNA. The chain is Large ribosomal subunit protein uL1 from Dinoroseobacter shibae (strain DSM 16493 / NCIMB 14021 / DFL 12).